We begin with the raw amino-acid sequence, 120 residues long: Ribosome-binding factor A (120 aa).

The protein belongs to the RbfA family. In terms of assembly, monomer. Binds 30S ribosomal subunits, but not 50S ribosomal subunits or 70S ribosomes.

The protein resides in the cytoplasm. Functionally, one of several proteins that assist in the late maturation steps of the functional core of the 30S ribosomal subunit. Associates with free 30S ribosomal subunits (but not with 30S subunits that are part of 70S ribosomes or polysomes). Required for efficient processing of 16S rRNA. May interact with the 5'-terminal helix region of 16S rRNA. The polypeptide is Ribosome-binding factor A (Borrelia garinii subsp. bavariensis (strain ATCC BAA-2496 / DSM 23469 / PBi) (Borreliella bavariensis)).